Consider the following 607-residue polypeptide: Glutamine--fructose-6-phosphate aminotransferase [isomerizing] (607 aa).

Cysteine 2 (nucleophile; for GATase activity) is an active-site residue. A Glutamine amidotransferase type-2 domain is found at 2–217; the sequence is CGIIGILGKR…DGDWAVLTRE (216 aa). SIS domains are found at residues 277-422 and 455-597; these read TVRS…QRGF and ICRN…VDQP. Residue lysine 602 is the For Fru-6P isomerization activity of the active site.

In terms of assembly, homodimer.

It is found in the cytoplasm. The enzyme catalyses D-fructose 6-phosphate + L-glutamine = D-glucosamine 6-phosphate + L-glutamate. Functionally, catalyzes the first step in hexosamine metabolism, converting fructose-6P into glucosamine-6P using glutamine as a nitrogen source. The chain is Glutamine--fructose-6-phosphate aminotransferase [isomerizing] from Bartonella henselae (strain ATCC 49882 / DSM 28221 / CCUG 30454 / Houston 1) (Rochalimaea henselae).